The following is a 295-amino-acid chain: Malonyl-[acyl-carrier protein] O-methyltransferase (295 aa).

The protein belongs to the methyltransferase superfamily.

The enzyme catalyses malonyl-[ACP] + S-adenosyl-L-methionine = malonyl-[ACP] methyl ester + S-adenosyl-L-homocysteine. It participates in cofactor biosynthesis; biotin biosynthesis. Converts the free carboxyl group of a malonyl-thioester to its methyl ester by transfer of a methyl group from S-adenosyl-L-methionine (SAM). It allows to synthesize pimeloyl-ACP via the fatty acid synthetic pathway. The sequence is that of Malonyl-[acyl-carrier protein] O-methyltransferase from Xylella fastidiosa (strain M23).